The sequence spans 194 residues: MSEIKLIVGLGNPGEKYADTRHNAGEWLIERLARRFNVSLNPESKFFGKTARTLVNGKEVRLLVPTTFMNLSGKAVGALASFYRIKPEEILVIHDELDLPAGTAKLKQGGGHGGHNGLKDIVAQLGNNNNFYRLRIGIGHPGHRDLVAGYVLNKPSPADRDALEKVLDEATDCVEIIFKDGMIKATNRLNSFKI.

Tyr17 provides a ligand contact to tRNA. The Proton acceptor role is filled by His22. Phe68, Asn70, and Asn116 together coordinate tRNA.

This sequence belongs to the PTH family. In terms of assembly, monomer.

Its subcellular location is the cytoplasm. It catalyses the reaction an N-acyl-L-alpha-aminoacyl-tRNA + H2O = an N-acyl-L-amino acid + a tRNA + H(+). Hydrolyzes ribosome-free peptidyl-tRNAs (with 1 or more amino acids incorporated), which drop off the ribosome during protein synthesis, or as a result of ribosome stalling. In terms of biological role, catalyzes the release of premature peptidyl moieties from peptidyl-tRNA molecules trapped in stalled 50S ribosomal subunits, and thus maintains levels of free tRNAs and 50S ribosomes. This is Peptidyl-tRNA hydrolase from Haemophilus influenzae (strain 86-028NP).